Here is a 510-residue protein sequence, read N- to C-terminus: D-alanine--D-alanyl carrier protein ligase (510 aa).

157-158 is a binding site for ATP; it reads TS. Asp-202 contributes to the D-alanine binding site. 297–302 is an ATP binding site; it reads NTYGPT. Position 306 (Val-306) interacts with D-alanine. Asp-389 and Lys-498 together coordinate ATP. Position 498 (Lys-498) interacts with D-alanine.

It belongs to the ATP-dependent AMP-binding enzyme family. DltA subfamily.

The protein localises to the cytoplasm. It carries out the reaction holo-[D-alanyl-carrier protein] + D-alanine + ATP = D-alanyl-[D-alanyl-carrier protein] + AMP + diphosphate. The protein operates within cell wall biogenesis; lipoteichoic acid biosynthesis. Catalyzes the first step in the D-alanylation of lipoteichoic acid (LTA), the activation of D-alanine and its transfer onto the D-alanyl carrier protein (Dcp) DltC. In an ATP-dependent two-step reaction, forms a high energy D-alanyl-AMP intermediate, followed by transfer of the D-alanyl residue as a thiol ester to the phosphopantheinyl prosthetic group of the Dcp. D-alanylation of LTA plays an important role in modulating the properties of the cell wall in Gram-positive bacteria, influencing the net charge of the cell wall. This chain is D-alanine--D-alanyl carrier protein ligase, found in Listeria monocytogenes serotype 4b (strain CLIP80459).